Reading from the N-terminus, the 481-residue chain is 3-isopropylmalate dehydratase large subunit (481 aa).

[4Fe-4S] cluster contacts are provided by cysteine 355, cysteine 415, and cysteine 418.

The protein belongs to the aconitase/IPM isomerase family. LeuC type 1 subfamily. As to quaternary structure, heterodimer of LeuC and LeuD. It depends on [4Fe-4S] cluster as a cofactor.

The catalysed reaction is (2R,3S)-3-isopropylmalate = (2S)-2-isopropylmalate. Its pathway is amino-acid biosynthesis; L-leucine biosynthesis; L-leucine from 3-methyl-2-oxobutanoate: step 2/4. Catalyzes the isomerization between 2-isopropylmalate and 3-isopropylmalate, via the formation of 2-isopropylmaleate. This chain is 3-isopropylmalate dehydratase large subunit, found in Symbiobacterium thermophilum (strain DSM 24528 / JCM 14929 / IAM 14863 / T).